A 159-amino-acid chain; its full sequence is Cyclic pyranopterin monophosphate synthase (159 aa).

Residues leucine 75–histidine 77 and methionine 113–glutamate 114 contribute to the substrate site. Residue aspartate 128 is part of the active site.

Belongs to the MoaC family. As to quaternary structure, homohexamer; trimer of dimers.

The enzyme catalyses (8S)-3',8-cyclo-7,8-dihydroguanosine 5'-triphosphate = cyclic pyranopterin phosphate + diphosphate. Its pathway is cofactor biosynthesis; molybdopterin biosynthesis. Its function is as follows. Catalyzes the conversion of (8S)-3',8-cyclo-7,8-dihydroguanosine 5'-triphosphate to cyclic pyranopterin monophosphate (cPMP). The polypeptide is Cyclic pyranopterin monophosphate synthase (Aliivibrio fischeri (strain MJ11) (Vibrio fischeri)).